Consider the following 1125-residue polypeptide: MADGIPLNPVRKNLRKTAYYDASRPARYQIEDESSNLDEMPLMMSEEAFENDESDYQTLPRARVSQRRRGLGWFLCGGWKVLCSSCCECLVHTCRRKKELKARTVWLGHPEKCEEKYPKNAIKNQKYNIVTFVPGVLYQQFKFFLNLYFLVVACSQFVPSLKIGYLYTYWAPLGFVLAVTMVREAVDEVRRCRRDKEMNSQLYSKLTVRGKVQVKSSDIQVGDLIIVEKNQRIPADMIFLRTSEKTGSCFIRTDQLDGETDWKLRIGVACTQRLPALGDLFSISAYVYVQKPQLDIHSFEGNFTREDCDPPIHESLSIENTLWASTVVASGTVIGVVIYTGKEMRSVMNTSQSKNKVGLLDLELNRLTKALFLAQVVLSVVMVALQGFLGPWFRNLFRFVVLFSYIIPISLRVNLDMGKSAYGWMIMKDENIPGTVVRTSTIPEELGRLVYLLTDKTGTLTQNEMVFKRLHLGTVSYGTDTMDEIQSHIIQSYAQVSSAQSNGSSASSTPSRKPQPPAPKVRKSVSSRIHEAVKAIALCHNVTPVYESRVNGANAEPESTEADQDFSDDNRTYQASSPDEVALVRWTESVGLTLVNRDLTSLQLKTPAGQILTYYILQIFPFTSESKRMGIIVREEATGDITFYMKGADVAMASIVQYNDWLEEECGNMAREGLRTLVVAKKSLTEEQYQDFENRYNQAKLSIHDRNLKVAAVVESLEREMELLCLTGVEDQLQADVRPTLELLRNAGIKIWMLTGDKLETATCIAKSSHLVSRNQDIHVFKPVSNRGEAHLELNAFRRKHDCALVISGDSLEVCLRYYEHEFVELACQCPAVVCCRCSPTQKAQIVRLLQQHTANRTCAIGDGGNDVSMIQAADCGIGIEGKEGKQASLAADFSITQFKHIGRLLMVHGRNSYKRSAALGQFVMHRGMIISTMQAVFSSIFYFASVPLYQGFLMVGYATIYTMFPVFSLVLDQDVKPEMALLYPELYKDLTKGRSLSFKTFLIWVLISIYQGGILMYGALVLFDQEFVHVVAISFTALILTELLMVALTIRTWHWLMVVAQLISLACYLASLAFLNEYFDLSFITTRVFLWKVCVITLVSCLPLYIIKYLKRKFSPPSYSKLSS.

The Cytoplasmic portion of the chain corresponds to 1–131 (MADGIPLNPV…IKNQKYNIVT (131 aa)). The helical transmembrane segment at 132 to 152 (FVPGVLYQQFKFFLNLYFLVV) threads the bilayer. At 153–161 (ACSQFVPSL) the chain is on the extracellular side. A helical membrane pass occupies residues 162–182 (KIGYLYTYWAPLGFVLAVTMV). The Cytoplasmic segment spans residues 183-369 (REAVDEVRRC…LDLELNRLTK (187 aa)). A helical membrane pass occupies residues 370-390 (ALFLAQVVLSVVMVALQGFLG). Topologically, residues 391–395 (PWFRN) are extracellular. The chain crosses the membrane as a helical span at residues 396-415 (LFRFVVLFSYIIPISLRVNL). At 416-928 (DMGKSAYGWM…ALGQFVMHRG (513 aa)) the chain is on the cytoplasmic side. Asp-455 (4-aspartylphosphate intermediate) is an active-site residue. ATP-binding residues include Asp-455, Lys-456, and Thr-457. Asp-455 lines the Mg(2+) pocket. Position 457 (Thr-457) interacts with Mg(2+). Residues 500–511 (QSNGSSASSTPS) show a composition bias toward low complexity. 2 disordered regions span residues 500–525 (QSNG…RKSV) and 552–574 (GANA…RTYQ). Positions 558–567 (ESTEADQDFS) are enriched in acidic residues. Glu-580, Phe-622, Lys-627, Lys-646, Arg-675, Thr-676, Thr-755, Gly-756, Asp-757, Arg-837, and Lys-843 together coordinate ATP. Residue Asp-863 coordinates Mg(2+). ATP-binding residues include Asn-866 and Asp-867. Asp-867 is a binding site for Mg(2+). A helical transmembrane segment spans residues 929 to 949 (MIISTMQAVFSSIFYFASVPL). The Extracellular portion of the chain corresponds to 950 to 951 (YQ). A helical membrane pass occupies residues 952–972 (GFLMVGYATIYTMFPVFSLVL). Over 973-1001 (DQDVKPEMALLYPELYKDLTKGRSLSFKT) the chain is Cytoplasmic. A helical membrane pass occupies residues 1002 to 1022 (FLIWVLISIYQGGILMYGALV). Topologically, residues 1023–1030 (LFDQEFVH) are extracellular. The chain crosses the membrane as a helical span at residues 1031 to 1051 (VVAISFTALILTELLMVALTI). Over 1052–1055 (RTWH) the chain is Cytoplasmic. Residues 1056–1076 (WLMVVAQLISLACYLASLAFL) form a helical membrane-spanning segment. Topologically, residues 1077 to 1088 (NEYFDLSFITTR) are extracellular. The chain crosses the membrane as a helical span at residues 1089 to 1109 (VFLWKVCVITLVSCLPLYIIK). At 1110-1125 (YLKRKFSPPSYSKLSS) the chain is on the cytoplasmic side.

Belongs to the cation transport ATPase (P-type) (TC 3.A.3) family. Type IV subfamily. Mg(2+) is required as a cofactor.

Its subcellular location is the golgi apparatus. It localises to the trans-Golgi network membrane. The enzyme catalyses ATP + H2O + phospholipidSide 1 = ADP + phosphate + phospholipidSide 2.. The chain is Probable phospholipid-transporting ATPase IIB (atp9b) from Danio rerio (Zebrafish).